Here is a 230-residue protein sequence, read N- to C-terminus: Flagellar L-ring protein (230 aa).

The N-terminal stretch at M1–G18 is a signal peptide. C19 is lipidated: N-palmitoyl cysteine. A lipid anchor (S-diacylglycerol cysteine) is attached at C19.

This sequence belongs to the FlgH family. As to quaternary structure, the basal body constitutes a major portion of the flagellar organelle and consists of four rings (L,P,S, and M) mounted on a central rod.

It is found in the cell outer membrane. The protein localises to the bacterial flagellum basal body. In terms of biological role, assembles around the rod to form the L-ring and probably protects the motor/basal body from shearing forces during rotation. This is Flagellar L-ring protein from Legionella pneumophila (strain Paris).